A 400-amino-acid polypeptide reads, in one-letter code: CinA-like protein (400 aa).

Belongs to the CinA family.

In Sulfurihydrogenibium sp. (strain YO3AOP1), this protein is CinA-like protein.